We begin with the raw amino-acid sequence, 237 residues long: Proteasome subunit alpha type-5-A (237 aa).

Met-1 is modified (N-acetylmethionine). Residues Lys-43 and Lys-66 each participate in a glycyl lysine isopeptide (Lys-Gly) (interchain with G-Cter in ubiquitin) cross-link.

Belongs to the peptidase T1A family. In terms of assembly, component of the 20S core complex of the 26S proteasome. The 26S proteasome is composed of a core protease (CP), known as the 20S proteasome, capped at one or both ends by the 19S regulatory particle (RP/PA700). The 20S proteasome core is composed of 28 subunits that are arranged in four stacked rings, resulting in a barrel-shaped structure. The two end rings are each formed by seven alpha subunits, and the two central rings are each formed by seven beta subunits. The catalytic chamber with the active sites is on the inside of the barrel.

The protein resides in the cytoplasm. It localises to the nucleus. Its function is as follows. The proteasome is a multicatalytic proteinase complex which is characterized by its ability to cleave peptides with Arg, Phe, Tyr, Leu, and Glu adjacent to the leaving group at neutral or slightly basic pH. The proteasome has an ATP-dependent proteolytic activity. This chain is Proteasome subunit alpha type-5-A (PAE1), found in Arabidopsis thaliana (Mouse-ear cress).